Here is a 108-residue protein sequence, read N- to C-terminus: Small ribosomal subunit protein uS10 (108 aa).

It belongs to the universal ribosomal protein uS10 family. As to quaternary structure, part of the 30S ribosomal subunit.

In terms of biological role, involved in the binding of tRNA to the ribosomes. This is Small ribosomal subunit protein uS10 from Ehrlichia chaffeensis (strain ATCC CRL-10679 / Arkansas).